The primary structure comprises 71 residues: Small ribosomal subunit protein bS18 (71 aa).

It belongs to the bacterial ribosomal protein bS18 family. In terms of assembly, part of the 30S ribosomal subunit. Forms a tight heterodimer with protein bS6.

In terms of biological role, binds as a heterodimer with protein bS6 to the central domain of the 16S rRNA, where it helps stabilize the platform of the 30S subunit. This Synechococcus elongatus (strain ATCC 33912 / PCC 7942 / FACHB-805) (Anacystis nidulans R2) protein is Small ribosomal subunit protein bS18.